A 92-amino-acid chain; its full sequence is Small ribosomal subunit protein bS20 (92 aa).

The interval 1–23 (MANTTSAKKATRKIARRTDVNKA) is disordered.

This sequence belongs to the bacterial ribosomal protein bS20 family.

Functionally, binds directly to 16S ribosomal RNA. This Rhizobium etli (strain CIAT 652) protein is Small ribosomal subunit protein bS20.